Here is a 90-residue protein sequence, read N- to C-terminus: DNA-directed RNA polymerase subunit Rpo5 (90 aa).

The protein belongs to the archaeal Rpo5/eukaryotic RPB5 RNA polymerase subunit family. As to quaternary structure, part of the RNA polymerase complex.

Its subcellular location is the cytoplasm. The catalysed reaction is RNA(n) + a ribonucleoside 5'-triphosphate = RNA(n+1) + diphosphate. In terms of biological role, DNA-dependent RNA polymerase (RNAP) catalyzes the transcription of DNA into RNA using the four ribonucleoside triphosphates as substrates. The polypeptide is DNA-directed RNA polymerase subunit Rpo5 (Aeropyrum pernix (strain ATCC 700893 / DSM 11879 / JCM 9820 / NBRC 100138 / K1)).